A 123-amino-acid chain; its full sequence is Steroid Delta-isomerase (123 aa).

Catalysis depends on tyrosine 12, which acts as the Proton donor. Aspartate 36 functions as the Proton acceptor in the catalytic mechanism. Aspartate 96 contributes to the substrate binding site.

Homodimer.

It carries out the reaction a 3-oxo-Delta(5)-steroid = a 3-oxo-Delta(4)-steroid. This is Steroid Delta-isomerase (ksdI) from Nocardioides simplex (Arthrobacter simplex).